We begin with the raw amino-acid sequence, 87 residues long: Serine protease inhibitor Kazal-type 12 (87 aa).

The signal sequence occupies residues 1-22 (MKPAGAFLLLISLACLFLSVDA). The Kazal-like domain occupies 26–87 (GGFQAFCSNY…KLGFKHEGKC (62 aa)). Cystine bridges form between C32-C68, C46-C65, and C54-C87.

In terms of tissue distribution, expressed in epydiymis, in the caput.

Its subcellular location is the secreted. In terms of biological role, inhibits trypsin. In Mus musculus (Mouse), this protein is Serine protease inhibitor Kazal-type 12 (Spink12).